The primary structure comprises 122 residues: Fluoride-specific ion channel FluC (122 aa).

4 helical membrane-spanning segments follow: residues 4–24 (ILLIGLGGFFGAILRYLVSGI), 36–56 (LIVNLLGSFIIGFLIYSSLFG), 65–85 (FIITGFCGALTTFSTFSYESF), and 100–120 (ILLNVFGCLGMVYLGRLASMF). The Na(+) site is built by G72 and T75.

The protein belongs to the fluoride channel Fluc/FEX (TC 1.A.43) family.

It is found in the cell membrane. It carries out the reaction fluoride(in) = fluoride(out). Its activity is regulated as follows. Na(+) is not transported, but it plays an essential structural role and its presence is essential for fluoride channel function. Its function is as follows. Fluoride-specific ion channel. Important for reducing fluoride concentration in the cell, thus reducing its toxicity. The protein is Fluoride-specific ion channel FluC of Methanococcus maripaludis (strain DSM 14266 / JCM 13030 / NBRC 101832 / S2 / LL).